The primary structure comprises 383 residues: Mannitol-1-phosphate 5-dehydrogenase (383 aa).

3–14 (ALHFGAGNIGRG) contributes to the NAD(+) binding site.

This sequence belongs to the mannitol dehydrogenase family.

It carries out the reaction D-mannitol 1-phosphate + NAD(+) = beta-D-fructose 6-phosphate + NADH + H(+). This is Mannitol-1-phosphate 5-dehydrogenase from Serratia proteamaculans (strain 568).